Here is a 356-residue protein sequence, read N- to C-terminus: D-alanine--D-alanine ligase (356 aa).

Residues K134–D339 enclose the ATP-grasp domain. K167–E222 provides a ligand contact to ATP. Mg(2+)-binding residues include D293, E306, and N308.

It belongs to the D-alanine--D-alanine ligase family. Mg(2+) is required as a cofactor. The cofactor is Mn(2+).

Its subcellular location is the cytoplasm. It catalyses the reaction 2 D-alanine + ATP = D-alanyl-D-alanine + ADP + phosphate + H(+). It functions in the pathway cell wall biogenesis; peptidoglycan biosynthesis. Cell wall formation. The polypeptide is D-alanine--D-alanine ligase (Staphylococcus haemolyticus (strain JCSC1435)).